The primary structure comprises 393 residues: Sialyltransferase-like protein 1 (393 aa).

Residues Met-1–Pro-8 lie on the Cytoplasmic side of the membrane. The chain crosses the membrane as a helical; Signal-anchor for type II membrane protein span at residues Phe-9 to Leu-27. Over Arg-28–His-393 the chain is Lumenal. Residues Asn-49, Asn-212, and Asn-258 are each glycosylated (N-linked (GlcNAc...) asparagine).

Belongs to the glycosyltransferase 29 family. In terms of tissue distribution, expressed in leaves and stalks. Expressed at low levels in roots.

Its subcellular location is the golgi apparatus membrane. Its function is as follows. Possesses sialyltransferase-like activity in vitro. Transfers sialic acid to the oligosaccharide Gal-beta-1,3-GalNAc and to glycoproteins such as asialofetuin, alpha-1-acid glycoprotein (NeuAc-alpha-2,3-Gal-beta-1,3-GalNAc-) and andasialo-alpha-1-acid glycoprotein. The transferred sialic acid is linked to galactose of Gal-beta-1,3-GalNAc through alpha-2,6-linkage. This Oryza sativa subsp. japonica (Rice) protein is Sialyltransferase-like protein 1.